A 514-amino-acid polypeptide reads, in one-letter code: Maltose/maltodextrin transport system permease protein MalF (514 aa).

The Cytoplasmic portion of the chain corresponds to 1–12; it reads MDAVKKKHWWQS. Residues 13–35 traverse the membrane as a helical segment; that stretch reads PQLTWSVIGLLCLLVGYLVVLMY. The Periplasmic portion of the chain corresponds to 36 to 39; that stretch reads AQGE. The chain crosses the membrane as a helical span at residues 40-57; it reads YLFAIMTLILSSVGLYIF. Residues 58 to 69 are Cytoplasmic-facing; it reads SNRKAYAWRYVY. The helical transmembrane segment at 70–92 threads the bilayer; that stretch reads PGLAGMGLFVLFPLICTIAIAFT. Over 93–283 the chain is Periplasmic; sequence NYSSTNQLTF…QKPFFAIFVW (191 aa). The ABC transmembrane type-1 domain maps to 281 to 505; it reads FVWTVVFSVL…LLVGALAIVN (225 aa). A helical membrane pass occupies residues 284-306; that stretch reads TVVFSVLTVILTVAVGMVLACLV. Residues 307-318 are Cytoplasmic-facing; it reads QWEALKGKAIYR. Residues 319–341 form a helical membrane-spanning segment; the sequence is VLLILPYAVPSFISILIFKGLFN. Residues 342–369 are Periplasmic-facing; the sequence is QSFGEINMMLSALFGIKPAWFSDPTTAR. A helical transmembrane segment spans residues 370 to 392; that stretch reads TMIIIVNTWLGYPYMMILCMGLL. Over 393–412 the chain is Cytoplasmic; it reads KAIPDDLYEASAMDGAGPFQ. A helical transmembrane segment spans residues 413–435; the sequence is NFFKITLPLLIKPLTPLMIASFA. Residues 436 to 483 lie on the Periplasmic side of the membrane; it reads FNFNNFVLIQLLTNGGPDRLGTTTPAGYTDLLVSYTYRIAFEGGGGQD. Residues 484–506 form a helical membrane-spanning segment; sequence FGLAAAIATLIFLLVGALAIVNL. The Cytoplasmic portion of the chain corresponds to 507 to 514; sequence KATRMKFD.

Belongs to the binding-protein-dependent transport system permease family. MalFG subfamily. The complex is composed of two ATP-binding proteins (MalK), two transmembrane proteins (MalG and MalF) and a solute-binding protein (MalE).

The protein resides in the cell inner membrane. Its function is as follows. Part of the ABC transporter complex MalEFGK involved in maltose/maltodextrin import. Probably responsible for the translocation of the substrate across the membrane. In Klebsiella aerogenes (Enterobacter aerogenes), this protein is Maltose/maltodextrin transport system permease protein MalF (malF).